A 459-amino-acid polypeptide reads, in one-letter code: Putrescine aminotransferase (459 aa).

Pyridoxal 5'-phosphate is bound by residues 150 to 151 and Q274; that span reads GT. K300 is modified (N6-(pyridoxal phosphate)lysine). T332 lines the pyridoxal 5'-phosphate pocket.

Belongs to the class-III pyridoxal-phosphate-dependent aminotransferase family. Putrescine aminotransferase subfamily. Pyridoxal 5'-phosphate is required as a cofactor.

The enzyme catalyses an alkane-alpha,omega-diamine + 2-oxoglutarate = an omega-aminoaldehyde + L-glutamate. The catalysed reaction is putrescine + 2-oxoglutarate = 1-pyrroline + L-glutamate + H2O. It carries out the reaction cadaverine + 2-oxoglutarate = 5-aminopentanal + L-glutamate. It functions in the pathway amine and polyamine degradation; putrescine degradation; 4-aminobutanal from putrescine (transaminase route): step 1/1. Catalyzes the aminotransferase reaction from putrescine to 2-oxoglutarate, leading to glutamate and 4-aminobutanal, which spontaneously cyclizes to form 1-pyrroline. This is the first step in one of two pathways for putrescine degradation, where putrescine is converted into 4-aminobutanoate (gamma-aminobutyrate or GABA) via 4-aminobutanal. Also functions as a cadaverine transaminase in a a L-lysine degradation pathway to succinate that proceeds via cadaverine, glutarate and L-2-hydroxyglutarate. In Salmonella choleraesuis (strain SC-B67), this protein is Putrescine aminotransferase.